We begin with the raw amino-acid sequence, 88 residues long: MSLQADFDKAAKDVRKLKTRPDDEELKELYGLYKQSVIGDIDIECPALLDLKGKAKWEAWNLQKGLSKEDAMNAYISKAKELIEKYGI.

The 86-residue stretch at 3–88 (LQADFDKAAK…AKELIEKYGI (86 aa)) folds into the ACB domain. An acyl-CoA contacts are provided by residues R15, 30 to 34 (YGLYK), K56, and Y75.

Belongs to the ACBD7 family.

Its function is as follows. Binds medium- and long-chain acyl-CoA esters. The protein is Acyl-CoA-binding domain-containing protein 7 (ACBD7) of Bos taurus (Bovine).